A 128-amino-acid polypeptide reads, in one-letter code: Large ribosomal subunit protein bL20c (128 aa).

This sequence belongs to the bacterial ribosomal protein bL20 family.

It localises to the plastid. In terms of biological role, binds directly to 23S ribosomal RNA and is necessary for the in vitro assembly process of the 50S ribosomal subunit. It is not involved in the protein synthesizing functions of that subunit. The sequence is that of Large ribosomal subunit protein bL20c (rpl20) from Lathraea clandestina (Purple toothwort).